Here is a 105-residue protein sequence, read N- to C-terminus: Thioredoxin (105 aa).

The Thioredoxin domain maps to Met1–Ile105. Cysteines 29 and 32 form a disulfide.

Belongs to the thioredoxin family.

Participates in various redox reactions through the reversible oxidation of its active center dithiol to a disulfide and catalyzes dithiol-disulfide exchange reactions. This is Thioredoxin (trxA) from Acetoanaerobium sticklandii (strain ATCC 12662 / DSM 519 / JCM 1433 / CCUG 9281 / NCIMB 10654 / HF) (Clostridium sticklandii).